Reading from the N-terminus, the 268-residue chain is Microtubule-associated protein RP/EB family member 1 (268 aa).

A2 is subject to N-acetylalanine. The 103-residue stretch at 14–116 (NLSRHDMLAW…FVQWFKKFFD (103 aa)) folds into the Calponin-homology (CH) domain. K66 bears the N6-crotonyllysine mark. The residue at position 124 (Y124) is a Phosphotyrosine. The interval 124–268 (YDPVAARQGQ…GGPQEEQEEY (145 aa)) is interaction with MTUS2/TIP150. The span at 147 to 160 (NKPKKPLSSSSAAP) shows a compositional bias: low complexity. The tract at residues 147–184 (NKPKKPLSSSSAAPQRPITTHRTTATPKAGPGVVRKNP) is disordered. S155 is modified (phosphoserine). Residues 163-172 (PITTHRTTAT) show a composition bias toward polar residues. The 71-residue stretch at 185 to 255 (GVGNGDDEAA…LYATDEGFVI (71 aa)) folds into the EB1 C-terminal domain. Residues 185 to 268 (GVGNGDDEAA…GGPQEEQEEY (84 aa)) form an interaction with CDK5RAP2 region. Residues 206-211 (TVEDLE) form an interaction with APC region. The interval 208 to 268 (EDLEKERDFY…GGPQEEQEEY (61 aa)) is DCTN1-binding. K220 is modified (N6-acetyllysine). The segment at 220–242 (KLRNIELICQENEGENNPVLQRI) is APC-binding. Residues 232 to 255 (EGENNPVLQRIVDILYATDEGFVI) are interaction with SKA1.

Belongs to the MAPRE family. As to quaternary structure, homodimer. Heterodimer with MAPRE3. Interacts with DCTN1, DCTN2, TERF1 and dynein intermediate chain. Interaction with DIAPH1 and DIAPH2. Interacts (via C-terminal residues 206-211) with APC (via C-terminal residues 2674-2845); the interaction inhibits association with and bundling of F-actin. Interacts with CLASP2, DST, KIF2C and STIM1; probably required for their targeting to the growing microtubule plus ends. Interacts with MTUS2; interaction is direct and probably targets MTUS2 to microtubules. Interacts (via C-terminus) with SKA1 (via SXIP motif); the interaction is direct and stabilizes the kinetochore-microtubule attachment of the SKA1 complex. Interacts with APC2. Interacts with CLASP1. Interacts with CDK5RAP2. Interacts with MACF1. Interacts with RABL2/RABL2A; binds preferentially to GTP-bound RABL2. Interacts with KCNAB2. Interacts (via C-terminus) with CLIP1. Interacts with SLAIN2 and SLAIN1. Interacts with KIF18B; this interaction is required for efficient accumulation of KIF18B at microtubule plus ends. Interacts with MISP. Interacts with KNSTRN. Interacts with NCKAP5L. Interacts with CAMSAP2. Interacts with PDE4DIP isoform 13/MMG8/SMYLE; this interaction is required for its recruitment to the Golgi apparatus. Forms a pericentrosomal complex with AKAP9, CDK5RAP2 and PDE4DIP isoform 13/MMG8/SMYLE; within this complex, MAPRE1 binding to CDK5RAP2 may be mediated by PDE4DIP. Interacts with AKNA. Interacts with GAS2L1, GAS2L2, and GAS2L3. Acetylation at Lys-220 by KAT2B/PCAF promotes dynamic kinetochore-microtubule interactions in early mitosis. In terms of processing, crotonylated by KAT5 during mitosis, promoting astral microtubule plasticity and dynamic connection between astral microtubules and the cortex during mitotic chromosome segregation, thereby ensuring accurate spindle positioning in mitosis. Decrotonylated by HDAC3.

It is found in the cytoplasm. It localises to the cytoskeleton. The protein resides in the microtubule organizing center. The protein localises to the centrosome. Its subcellular location is the golgi apparatus. It is found in the spindle. It localises to the spindle pole. Functionally, plus-end tracking protein (+TIP) that binds to the plus-end of microtubules and regulates the dynamics of the microtubule cytoskeleton. Recruits other +TIP proteins to microtubules by binding to a conserved Ser-X-Leu-Pro (SXLP) motif in their polypeptide chains. Promotes cytoplasmic microtubule nucleation and elongation. Involved in mitotic spindle positioning by stabilizing microtubules and promoting dynamic connection between astral microtubules and the cortex during mitotic chromosome segregation. Assists chromosome alignment in metaphase by recruiting the SKA complex to the spindle and stabilizing its interactions with microtubule bundles (K-fibers). Also acts as a regulator of minus-end microtubule organization: interacts with the complex formed by AKAP9 and PDE4DIP, leading to recruit CAMSAP2 to the Golgi apparatus, thereby tethering non-centrosomal minus-end microtubules to the Golgi, an important step for polarized cell movement. Promotes elongation of CAMSAP2-decorated microtubule stretches on the minus-end of microtubules. Acts as a regulator of autophagosome transport via interaction with CAMSAP2. Functions downstream of Rho GTPases and DIAPH1 in stable microtubule formation. May play a role in cell migration. This chain is Microtubule-associated protein RP/EB family member 1 (MAPRE1), found in Bos taurus (Bovine).